A 178-amino-acid chain; its full sequence is Large ribosomal subunit protein uL6 (178 aa).

It belongs to the universal ribosomal protein uL6 family. As to quaternary structure, part of the 50S ribosomal subunit.

Functionally, this protein binds to the 23S rRNA, and is important in its secondary structure. It is located near the subunit interface in the base of the L7/L12 stalk, and near the tRNA binding site of the peptidyltransferase center. This chain is Large ribosomal subunit protein uL6, found in Lactiplantibacillus plantarum (strain ATCC BAA-793 / NCIMB 8826 / WCFS1) (Lactobacillus plantarum).